The sequence spans 168 residues: Thioredoxin Y, chloroplastic (168 aa).

Residues methionine 1 to arginine 58 constitute a chloroplast transit peptide. The Thioredoxin domain maps to valine 59–glutamate 165. Catalysis depends on nucleophile residues cysteine 89 and cysteine 92. Cysteine 89 and cysteine 92 are disulfide-bonded.

It belongs to the thioredoxin family. Plant Y-type subfamily.

The protein resides in the plastid. The protein localises to the chloroplast. Probable thiol-disulfide oxidoreductase that may participate in various redox reactions. The polypeptide is Thioredoxin Y, chloroplastic (Oryza sativa subsp. japonica (Rice)).